The chain runs to 190 residues: Potassium-transporting ATPase KdpC subunit (190 aa).

Residues 13–33 form a helical membrane-spanning segment; that stretch reads IGFLLLTLVCGVLYPGVVTVF.

The protein belongs to the KdpC family. In terms of assembly, the system is composed of three essential subunits: KdpA, KdpB and KdpC.

It localises to the cell membrane. Functionally, part of the high-affinity ATP-driven potassium transport (or Kdp) system, which catalyzes the hydrolysis of ATP coupled with the electrogenic transport of potassium into the cytoplasm. This subunit acts as a catalytic chaperone that increases the ATP-binding affinity of the ATP-hydrolyzing subunit KdpB by the formation of a transient KdpB/KdpC/ATP ternary complex. This chain is Potassium-transporting ATPase KdpC subunit, found in Listeria monocytogenes serovar 1/2a (strain ATCC BAA-679 / EGD-e).